Consider the following 374-residue polypeptide: 2-aminoethylphosphonate--pyruvate transaminase 1 (374 aa).

At K195 the chain carries N6-(pyridoxal phosphate)lysine.

The protein belongs to the class-V pyridoxal-phosphate-dependent aminotransferase family. PhnW subfamily. Homodimer. Pyridoxal 5'-phosphate is required as a cofactor.

It catalyses the reaction (2-aminoethyl)phosphonate + pyruvate = phosphonoacetaldehyde + L-alanine. Functionally, involved in phosphonate degradation. The polypeptide is 2-aminoethylphosphonate--pyruvate transaminase 1 (Polaromonas sp. (strain JS666 / ATCC BAA-500)).